The primary structure comprises 591 residues: Cytidine monophosphate-N-acetylneuraminic acid hydroxylase (591 aa).

Residues 12–110 form the Rieske domain; that stretch reads LEAEDVRNLK…AVLSETDGSL (99 aa). [2Fe-2S] cluster-binding residues include Cys52, His54, Cys73, and His76.

Belongs to the CMP-Neu5Ac hydroxylase family. It depends on [2Fe-2S] cluster as a cofactor.

Its subcellular location is the cytoplasm. The enzyme catalyses CMP-N-acetyl-beta-neuraminate + 2 Fe(II)-[cytochrome b5] + O2 + 2 H(+) = CMP-N-glycoloyl-beta-neuraminate + 2 Fe(III)-[cytochrome b5] + H2O. Its pathway is amino-sugar metabolism; N-acetylneuraminate metabolism. In terms of biological role, sialic acids are components of carbohydrate chains of glycoconjugates and are involved in cell-cell recognition and cell-pathogen interactions. Catalyzes the conversion of CMP-N-acetylneuraminic acid (CMP-Neu5Ac) into its hydroxylated derivative CMP-N-glycolylneuraminic acid (CMP-Neu5Gc), a sialic acid abundantly expressed at the surface of many cells. This Danio rerio (Zebrafish) protein is Cytidine monophosphate-N-acetylneuraminic acid hydroxylase (cmah).